Here is a 549-residue protein sequence, read N- to C-terminus: Putative acyl-CoA synthetase YngI (549 aa).

ATP contacts are provided by residues 198 to 206 (TSGTTGFPK), aspartate 423, arginine 438, and lysine 529.

It belongs to the ATP-dependent AMP-binding enzyme family.

The protein is Putative acyl-CoA synthetase YngI (yngI) of Bacillus subtilis (strain 168).